Consider the following 883-residue polypeptide: Kinesin-like protein 5 (883 aa).

The Kinesin motor domain occupies 6–390; sequence SITVTVRVRP…LKYANRAKNI (385 aa). 144-151 contributes to the ATP binding site; that stretch reads GATGCGKT. Coiled-coil stretches lie at residues 396 to 435 and 563 to 588; these read RNMI…SSQS and LQDE…VDEF. A disordered region spans residues 755-785; it reads VSPMLEDKPEPGLLIKSPLEKKQEVNSESTQ.

The protein belongs to the TRAFAC class myosin-kinesin ATPase superfamily. Kinesin family. Kinesin II subfamily. Heterodimer with klp6.

The protein localises to the cytoplasm. The protein resides in the cytoskeleton. It localises to the chromosome. It is found in the centromere. Its subcellular location is the kinetochore. The protein localises to the spindle. Has a role in establishing metaphase during mitosis. Required for chromosome segregation where it generates tension during kinetochore capturing. The sequence is that of Kinesin-like protein 5 (klp5) from Schizosaccharomyces pombe (strain 972 / ATCC 24843) (Fission yeast).